The chain runs to 179 residues: UPF0167 protein PA1536 (179 aa).

Belongs to the UPF0167 family.

This chain is UPF0167 protein PA1536, found in Pseudomonas aeruginosa (strain ATCC 15692 / DSM 22644 / CIP 104116 / JCM 14847 / LMG 12228 / 1C / PRS 101 / PAO1).